Consider the following 322-residue polypeptide: Putative pyruvyl transferase EpsO (322 aa).

Belongs to the polysaccharide pyruvyl transferase family.

Functionally, may be involved in the production of the exopolysaccharide (EPS) component of the extracellular matrix during biofilm formation. EPS is responsible for the adhesion of chains of cells into bundles. The polypeptide is Putative pyruvyl transferase EpsO (epsO) (Bacillus subtilis (strain 168)).